The chain runs to 468 residues: Acetyl-CoA decarbonylase/synthase complex subunit gamma 2 (468 aa).

A 4Fe-4S domain is found at 1-60 (MKINSPLEAYKYLPQTNCGECGEATCMAFASKLIDRSGKPTQCPPLVKEKKFAKKLAELE). [4Fe-4S] cluster is bound by residues Cys-18, Cys-21, Cys-26, and Cys-43.

As to quaternary structure, heterodimer of delta and gamma chains. The ACDS complex is made up of alpha, epsilon, beta, gamma and delta chains with a probable stoichiometry of (alpha(2)epsilon(2))(4)-beta(8)-(gamma(1)delta(1))(8). Corrinoid serves as cofactor. [4Fe-4S] cluster is required as a cofactor.

The catalysed reaction is 5,6,7,8-tetrahydrosarcinapterin + methyl-Co(III)-[corrinoid Fe-S protein] = 5-methyltetrahydrosarcinapterin + Co(I)-[corrinoid Fe-S protein] + H(+). It participates in one-carbon metabolism; methanogenesis from acetate. Functionally, part of a complex that catalyzes the reversible cleavage of acetyl-CoA, allowing growth on acetate as sole source of carbon and energy. The chain is Acetyl-CoA decarbonylase/synthase complex subunit gamma 2 from Methanosarcina thermophila.